The following is a 157-amino-acid chain: Transcriptional repressor NrdR (157 aa).

A zinc finger spans residues 3–34 (CPFCNAEDTKVIDSRLVEEGTQVRRRRECLKC). One can recognise an ATP-cone domain in the interval 49–139 (PRIIKRDGRR…VYRSFQDINA (91 aa)).

Belongs to the NrdR family. It depends on Zn(2+) as a cofactor.

Functionally, negatively regulates transcription of bacterial ribonucleotide reductase nrd genes and operons by binding to NrdR-boxes. The protein is Transcriptional repressor NrdR of Coxiella burnetii (strain CbuK_Q154) (Coxiella burnetii (strain Q154)).